The primary structure comprises 228 residues: MVPSFVVYSSWVNGRQRYIRQAFASILFYIIRDTTLSFPSHTTMSTKPETDLQTVLDSEIKEWHFHIYFHQNNAAEHQAALELRDAVLRLRQDGAFVAVPLFRVNMDPMGPHPVGSYEIWVPSETFASVFSYLCMNRGRLSILVHPLTREELRDHEIRNAWIGPSFPLNLANLPIKSDEIPLQYPSLKLGYSSTAHKMSLEERRKLGDDIEAVLRGEKEAARAPHRDA.

In terms of assembly, homodimer. In terms of tissue distribution, expressed at high level in coloured cap tissue and at least 10 times lower level in the stipe.

It is found in the cytoplasm. It participates in pigment biosynthesis; betalain biosynthesis. Its function is as follows. Extradiol dioxygenase that opens up the cyclic ring of DOPA between carbons 4 and 5 thus producing an unstable seco-DOPA that rearranges non-enzymatically to betalamic acid. Can also catalyze the formation of muscaflavin (a pigment found in the hygrocybe mushrooms family and of some amanita species only) by a 2,3-extradiol cleavage of DOPA. This chain is DOPA 4,5-dioxygenase (DODA), found in Amanita muscaria (Fly agaric).